Consider the following 815-residue polypeptide: MQEQYNPQQIEQAAQSFWDENKVFKAIADSSKEKFYCLSMFPYPSGRLHMGHVRNYTIGDVISRYQRMQGKNVLQPMGWDAFGLPAENAAIKHKTAPAKWTTENIAYMKGQLKELGFGYDWDREIATCTPEYYKWEQWFFTQLVEKGLAYKKTAAVNWCPEDQTVLANEQVEDGCCWRCGTNVEKKEISQWFIRITDYAEELLNDLDQLDGWPEKVKAMQRNWIGRSEGLEFSFAVEGKDERLSVYTTRPDTIMGVTYVAVATQHPLSLEASANNADLAAFIEESKKMSTTEADMATVEKKGMDTGFKAIHPITGEAVPVYAANFVLMDYGSGAVMSVPAHDQRDFEFAKKYNLAIKQVVQPAGDEVIDLEKAAFTEKGVLCNSGEFDGLAFKEAFDAIAAWMVERNLGEVKVNYRLRDWGVSRQRYWGTPIPTINLKDGSVVPVPQDQLPVELPTDVIMDGVNSPIKNNPDFSSIMFNGEEAERETDTFDTFMESSWYFARYCCPDSTDAMLTEEANYWLPVDQYVGGVEHAILHLLYSRFFHKLLRDAGLVNSDEPFKRLLTQGMVNKDGTKMSKSKGNTVDPQEMIEKYGADTVRLFMMFSAPPEQSLEWNDAGVDGASRFLRRLWALSYRHTNAGKVGELNIAELNGAQKALRRKTHETIQKVSDDIERRQTFNTAIAAVMELCNEISKFEDSSELGLAVEQEALEAATLLLSPIVPHIAHQLWSELGHSDNIVNTPWPTLDEEALIKDELTIVVQVLGKKRAELTVSANADNKTIEAEALAHPSVAKLLEGKTVRKVIVVPGRLVNIVAN.

The 'HIGH' region motif lies at 42-52; that stretch reads PYPSGRLHMGH. Residues 574–578 carry the 'KMSKS' region motif; sequence KMSKS. Lys-577 is a binding site for ATP.

It belongs to the class-I aminoacyl-tRNA synthetase family.

It is found in the cytoplasm. It catalyses the reaction tRNA(Leu) + L-leucine + ATP = L-leucyl-tRNA(Leu) + AMP + diphosphate. The chain is Leucine--tRNA ligase from Marinomonas sp. (strain MWYL1).